The primary structure comprises 613 residues: Dihydroxy-acid dehydratase (613 aa).

Position 81 (Asp81) interacts with Mg(2+). Position 122 (Cys122) interacts with [2Fe-2S] cluster. Asp123 and Lys124 together coordinate Mg(2+). Lys124 carries the post-translational modification N6-carboxylysine. Residue Cys195 participates in [2Fe-2S] cluster binding. Residue Glu491 participates in Mg(2+) binding. Ser517 functions as the Proton acceptor in the catalytic mechanism.

The protein belongs to the IlvD/Edd family. As to quaternary structure, homodimer. It depends on [2Fe-2S] cluster as a cofactor. Requires Mg(2+) as cofactor.

The catalysed reaction is (2R)-2,3-dihydroxy-3-methylbutanoate = 3-methyl-2-oxobutanoate + H2O. It carries out the reaction (2R,3R)-2,3-dihydroxy-3-methylpentanoate = (S)-3-methyl-2-oxopentanoate + H2O. The protein operates within amino-acid biosynthesis; L-isoleucine biosynthesis; L-isoleucine from 2-oxobutanoate: step 3/4. Its pathway is amino-acid biosynthesis; L-valine biosynthesis; L-valine from pyruvate: step 3/4. Functions in the biosynthesis of branched-chain amino acids. Catalyzes the dehydration of (2R,3R)-2,3-dihydroxy-3-methylpentanoate (2,3-dihydroxy-3-methylvalerate) into 2-oxo-3-methylpentanoate (2-oxo-3-methylvalerate) and of (2R)-2,3-dihydroxy-3-methylbutanoate (2,3-dihydroxyisovalerate) into 2-oxo-3-methylbutanoate (2-oxoisovalerate), the penultimate precursor to L-isoleucine and L-valine, respectively. The chain is Dihydroxy-acid dehydratase from Vibrio vulnificus (strain YJ016).